A 60-amino-acid chain; its full sequence is Movement protein TGBp3 (60 aa).

At 1–6 the chain is on the lumenal side; sequence MHYIDW. The chain crosses the membrane as a helical span at residues 7–23; the sequence is VILLTFAAALIVCLTPK. The Cytoplasmic segment spans residues 24 to 60; sequence PEPCIITVSGASATVSNCPNPELLTDLVKALKPAKPV.

This sequence belongs to the Tymovirales TGBp3 protein family.

It localises to the host endoplasmic reticulum membrane. In terms of biological role, plays a role in viral cell-to-cell propagation, by facilitating genome transport to neighboring plant cells through plasmosdesmata. May induce the formation of granular vesicles derived from the Endoplasmic reticulum, which align on actin filaments. The polypeptide is Movement protein TGBp3 (Citrus (ICRSV)).